Consider the following 173-residue polypeptide: Adenine phosphoribosyltransferase (173 aa).

It belongs to the purine/pyrimidine phosphoribosyltransferase family. Homodimer.

It is found in the cytoplasm. The catalysed reaction is AMP + diphosphate = 5-phospho-alpha-D-ribose 1-diphosphate + adenine. It participates in purine metabolism; AMP biosynthesis via salvage pathway; AMP from adenine: step 1/1. Its function is as follows. Catalyzes a salvage reaction resulting in the formation of AMP, that is energically less costly than de novo synthesis. The chain is Adenine phosphoribosyltransferase from Caldanaerobacter subterraneus subsp. tengcongensis (strain DSM 15242 / JCM 11007 / NBRC 100824 / MB4) (Thermoanaerobacter tengcongensis).